The sequence spans 491 residues: Beta-galactosidase (491 aa).

Glu209 serves as the catalytic Proton donor. The Nucleophile role is filled by Glu389.

It belongs to the glycosyl hydrolase 1 family.

The enzyme catalyses Hydrolysis of terminal non-reducing beta-D-galactose residues in beta-D-galactosides.. The protein is Beta-galactosidase (bgaS) of Sulfolobus acidocaldarius (strain ATCC 33909 / DSM 639 / JCM 8929 / NBRC 15157 / NCIMB 11770).